Reading from the N-terminus, the 327-residue chain is Probable serine/threonine-protein kinase WNK5 (327 aa).

The disordered stretch occupies residues 1–48 (MPPNPTPPRRATTTTTRATSGVRRGEEEQGGMAVSASAGEEEEAFEEV). Low complexity predominate over residues 9–19 (RRATTTTTRAT). A compositionally biased stretch (acidic residues) spans 39-48 (GEEEEAFEEV). The 260-residue stretch at 55–314 (GRYADVLGLG…AAELLRDPFF (260 aa)) folds into the Protein kinase domain. 136–139 (TEVC) is a binding site for ATP. The active-site Proton acceptor is aspartate 203.

It belongs to the protein kinase superfamily. Ser/Thr protein kinase family. WNK subfamily.

It catalyses the reaction L-seryl-[protein] + ATP = O-phospho-L-seryl-[protein] + ADP + H(+). The catalysed reaction is L-threonyl-[protein] + ATP = O-phospho-L-threonyl-[protein] + ADP + H(+). This Oryza sativa subsp. japonica (Rice) protein is Probable serine/threonine-protein kinase WNK5 (WNK5).